The chain runs to 976 residues: Receptor-like protein 14 (976 aa).

The first 26 residues, 1–26 (MERKVFSGQNLIWVMLLLVQLRGYKC), serve as a signal peptide directing secretion. The Extracellular portion of the chain corresponds to 27–928 (CIEKERKALL…DDDDEAAIDM (902 aa)). N-linked (GlcNAc...) asparagine glycosylation is found at N60, N75, N98, N112, N151, N185, and N200. LRR repeat units follow at residues 105–127 (FEEL…LFDD), 137–160 (LRNL…FLNA), 162–185 (TSLT…ELKN), 186–209 (LTKL…FTHL), 210–233 (EKLK…ELKV), 234–258 (LTNL…VFCE), 260–283 (KNLR…LGNL), 284–306 (NKLR…SFNS), 308–331 (ESLE…PLAN), 333–358 (TKLK…WLPK), 359–381 (FQLT…LVYQ), 382–405 (TNLR…LLEN), 407–428 (PELK…PTIV), 429–452 (HKLQ…IGHV), 454–477 (PRLL…MGEM), 478–501 (NDIS…LLTG), and 503–528 (FSLI…RLTS). N331 carries N-linked (GlcNAc...) asparagine glycosylation. N-linked (GlcNAc...) asparagine glycosylation occurs at N416. 2 N-linked (GlcNAc...) asparagine glycosylation sites follow: N460 and N489. One copy of the LRR 18; degenerate repeat lies at 530 to 549 (IVLRMHNNLFTGEIGVGLRT). LRR repeat units follow at residues 550–573 (LVNL…SIPP), 575–599 (SSHL…LLAI), 600–623 (HHLN…VVNS), 625–645 (YGIK…VTLL), 646–669 (ENAY…VNTG), 671–692 (MITL…LCDL), 693–715 (TSIR…CLNH), 782–805 (LDYM…ELGD), 806–829 (LSKL…NFSK), 831–854 (KDIE…LTNL), and 856–879 (SLAV…QFNT). A glycan (N-linked (GlcNAc...) asparagine) is linked at N552. N-linked (GlcNAc...) asparagine glycosylation occurs at N633. An N-linked (GlcNAc...) asparagine glycan is attached at N680. Residues N813, N826, N853, N861, and N866 are each glycosylated (N-linked (GlcNAc...) asparagine). The interval 897-922 (DRSCEGKKNTKEADNGGEEEEEDDDD) is disordered. The segment covering 898–910 (RSCEGKKNTKEAD) has biased composition (basic and acidic residues). The segment covering 911–922 (NGGEEEEEDDDD) has biased composition (acidic residues). Residues 929 to 949 (VVLYWTTGSTYAIALIGILVL) traverse the membrane as a helical segment. At 950–976 (MCFDCPWRRTWLCIVDAFIASGKSMFS) the chain is on the cytoplasmic side.

This sequence belongs to the RLP family.

The protein localises to the cell membrane. This is Receptor-like protein 14 from Arabidopsis thaliana (Mouse-ear cress).